Consider the following 1025-residue polypeptide: Multidrug resistance protein MdtC (1025 aa).

The Cytoplasmic segment spans residues 1-6 (MKFFAL). The chain crosses the membrane as a helical span at residues 7–29 (FIYRPVATILLSVAITLCGILGF). The Periplasmic portion of the chain corresponds to 30–335 (RMLPVAPLPQ…TIRASLEEVE (306 aa)). A helical transmembrane segment spans residues 336 to 353 (QTLIISVALVILVVFLFL). The Cytoplasmic portion of the chain corresponds to 354 to 359 (RSGRAT). A helical membrane pass occupies residues 360–379 (IIPAVAVPVSLIGTFAAMYL). At 380–388 (CGFSLNNLS) the chain is on the periplasmic side. A helical transmembrane segment spans residues 389 to 411 (LMALTIATGFVVDDAIVVLENIA). Over 412–430 (RHLEAGMKPLQAALQGTRE) the chain is Cytoplasmic. The helical transmembrane segment at 431–453 (VGFTVLSMSLSLVAVFLPLLLMG) threads the bilayer. The Periplasmic portion of the chain corresponds to 454–467 (GLPGRLLREFAVTL). The helical transmembrane segment at 468–490 (SVAIGISLLVSLTLTPMMCGWML) threads the bilayer. The Cytoplasmic segment spans residues 491–852 (KASKPREQKR…QVFQETMNSQ (362 aa)). A helical transmembrane segment spans residues 853 to 875 (VILIIAAIATVYIVLGILYESYV). The Periplasmic segment spans residues 876–894 (HPLTILSTLPSAGVGALLA). A helical transmembrane segment spans residues 895 to 917 (LELFNAPFSLIALIGIMLLIGIV). Residues 918 to 947 (KKNAIMMVDFALEAQRHGNLTPQEAIFQAC) are Cytoplasmic-facing. Residues 948 to 970 (LLRFRPIMMTTLAALFGALPLVL) form a helical membrane-spanning segment. The Periplasmic portion of the chain corresponds to 971–984 (SGGDGSELRQPLGI). Residues 985-1007 (TIVGGLVMSQLLTLYTTPVVYLF) traverse the membrane as a helical segment. The Cytoplasmic portion of the chain corresponds to 1008 to 1025 (FDRLRLRFSRKPKQAVTE).

Belongs to the resistance-nodulation-cell division (RND) (TC 2.A.6) family. MdtC subfamily. In terms of assembly, part of a tripartite efflux system composed of MdtA, MdtB and MdtC. MdtC forms a heteromultimer with MdtB.

It localises to the cell inner membrane. In terms of biological role, the MdtABC tripartite complex confers resistance against novobiocin and deoxycholate. The sequence is that of Multidrug resistance protein MdtC from Escherichia coli O6:H1 (strain CFT073 / ATCC 700928 / UPEC).